We begin with the raw amino-acid sequence, 287 residues long: Pantothenate synthetase (287 aa).

30 to 37 is a binding site for ATP; the sequence is MGNLHDGH. Residue histidine 37 is the Proton donor of the active site. Glutamine 61 contacts (R)-pantoate. Glutamine 61 is a beta-alanine binding site. An ATP-binding site is contributed by 148–151; that stretch reads GQKD. Glutamine 154 is a (R)-pantoate binding site. ATP-binding positions include isoleucine 177 and 185–188; that span reads LSSR.

This sequence belongs to the pantothenate synthetase family. In terms of assembly, homodimer.

The protein localises to the cytoplasm. The catalysed reaction is (R)-pantoate + beta-alanine + ATP = (R)-pantothenate + AMP + diphosphate + H(+). It participates in cofactor biosynthesis; (R)-pantothenate biosynthesis; (R)-pantothenate from (R)-pantoate and beta-alanine: step 1/1. In terms of biological role, catalyzes the condensation of pantoate with beta-alanine in an ATP-dependent reaction via a pantoyl-adenylate intermediate. The sequence is that of Pantothenate synthetase from Psychrobacter cryohalolentis (strain ATCC BAA-1226 / DSM 17306 / VKM B-2378 / K5).